A 347-amino-acid chain; its full sequence is Selenide, water dikinase (347 aa).

The active site involves cysteine 17. Residues lysine 20 and 48-50 contribute to the ATP site; that span reads TRD. Aspartate 51 provides a ligand contact to Mg(2+). ATP-binding positions include aspartate 68, aspartate 91, and 139–141; that span reads GHS. Position 91 (aspartate 91) interacts with Mg(2+). Aspartate 227 is a binding site for Mg(2+).

Belongs to the selenophosphate synthase 1 family. Class I subfamily. As to quaternary structure, homodimer. It depends on Mg(2+) as a cofactor.

It catalyses the reaction hydrogenselenide + ATP + H2O = selenophosphate + AMP + phosphate + 2 H(+). Its function is as follows. Synthesizes selenophosphate from selenide and ATP. The sequence is that of Selenide, water dikinase from Escherichia coli O9:H4 (strain HS).